Reading from the N-terminus, the 449-residue chain is 23S rRNA (uracil(1939)-C(5))-methyltransferase RlmD (449 aa).

The region spanning 12-70 (SKQLSAKQSFSVHQLDHLGAGIAQHQGKVVFIPGALPNETVQAQLTEQKKNYARAKLIK) is the TRAM domain. Residues cysteine 83, cysteine 89, cysteine 92, and cysteine 170 each contribute to the [4Fe-4S] cluster site. S-adenosyl-L-methionine contacts are provided by glutamine 282, phenylalanine 311, asparagine 316, glutamate 332, aspartate 359, and aspartate 379. Residue cysteine 405 is the Nucleophile of the active site.

The protein belongs to the class I-like SAM-binding methyltransferase superfamily. RNA M5U methyltransferase family. RlmD subfamily.

The enzyme catalyses uridine(1939) in 23S rRNA + S-adenosyl-L-methionine = 5-methyluridine(1939) in 23S rRNA + S-adenosyl-L-homocysteine + H(+). Functionally, catalyzes the formation of 5-methyl-uridine at position 1939 (m5U1939) in 23S rRNA. The polypeptide is 23S rRNA (uracil(1939)-C(5))-methyltransferase RlmD (Shewanella sp. (strain ANA-3)).